Here is a 58-residue protein sequence, read N- to C-terminus: uncharacterized protein (58 aa).

Residues 18-38 form a helical membrane-spanning segment; the sequence is WLMIVLLFCSTGMVFLATILE.

It is found in the membrane. This is an uncharacterized protein from Saccharomyces cerevisiae (strain ATCC 204508 / S288c) (Baker's yeast).